Consider the following 386-residue polypeptide: MNIHEYQAKEILRKYGVPTSTGLVVTKTEKINETIDKLNTEVYVVKAQIHAGGRGKAGGVKVVKSKEEAKKVAHDMFGINLVTHQTGPQGQKVNRLYIESGCEILKEYYFSIVFDRSASCITFIASTEGGVDIEEVAEKTPEKIIKFSVDPATGLQDFHMRGIAYELGFKDNQAKQMKEIVKSVYNAFIETDAAQIEINPLIVNSDGNLLALDAKITFDDNGLLRHPNITAMRDHDEEDPLETRAANAGLSYVKMDGNIGCMVNGAGLAMATMDIIKLYGASPANFLDVGGGADRERVKEALKIILSDKAVQGILVNIFGGIMRCDIIAEGIIAAAKDIGIKVPLVVRLAGTNVEKGKEILSNSGLEIIPAHDLADAANKIVEAIR.

Residues 9–244 (KEILRKYGVP…HDEEDPLETR (236 aa)) enclose the ATP-grasp domain. Residues K46, 53–55 (GRG), E99, C102, and E107 contribute to the ATP site. The Mg(2+) site is built by N199 and D213. Substrate-binding positions include N264 and 321–323 (GIM).

Belongs to the succinate/malate CoA ligase beta subunit family. In terms of assembly, heterotetramer of two alpha and two beta subunits. The cofactor is Mg(2+).

The catalysed reaction is succinate + ATP + CoA = succinyl-CoA + ADP + phosphate. The enzyme catalyses GTP + succinate + CoA = succinyl-CoA + GDP + phosphate. It participates in carbohydrate metabolism; tricarboxylic acid cycle; succinate from succinyl-CoA (ligase route): step 1/1. Functionally, succinyl-CoA synthetase functions in the citric acid cycle (TCA), coupling the hydrolysis of succinyl-CoA to the synthesis of either ATP or GTP and thus represents the only step of substrate-level phosphorylation in the TCA. The beta subunit provides nucleotide specificity of the enzyme and binds the substrate succinate, while the binding sites for coenzyme A and phosphate are found in the alpha subunit. This Rickettsia rickettsii (strain Iowa) protein is Succinate--CoA ligase [ADP-forming] subunit beta.